A 158-amino-acid chain; its full sequence is Endoribonuclease YbeY (158 aa).

Zn(2+) contacts are provided by H119, H123, and H129.

This sequence belongs to the endoribonuclease YbeY family. Zn(2+) serves as cofactor.

Its subcellular location is the cytoplasm. Functionally, single strand-specific metallo-endoribonuclease involved in late-stage 70S ribosome quality control and in maturation of the 3' terminus of the 16S rRNA. The protein is Endoribonuclease YbeY of Acinetobacter baumannii (strain SDF).